Consider the following 158-residue polypeptide: Histone H2B.1 (158 aa).

N6-acetyllysine is present on residues lysine 7 and lysine 25. Disordered regions lie at residues alanine 26–glycine 45 and valine 135–threonine 158. Positions valine 135–lysine 144 are enriched in basic and acidic residues. A compositionally biased stretch (basic residues) spans serine 147–threonine 158.

It belongs to the histone H2B family. As to quaternary structure, the nucleosome is a histone octamer containing two molecules each of H2A, H2B, H3 and H4 assembled in one H3-H4 heterotetramer and two H2A-H2B heterodimers. The octamer wraps approximately 147 bp of DNA. Post-translationally, can be acetylated to form H2BK6ac and H2BK33ac. In terms of tissue distribution, expressed in the generative cell within the bicellular pollen. Not detected in other reproductive or vegetative tissues.

The protein localises to the nucleus. The protein resides in the chromosome. Its function is as follows. Core component of nucleosome. Nucleosomes wrap and compact DNA into chromatin, limiting DNA accessibility to the cellular machineries which require DNA as a template. Histones thereby play a central role in transcription regulation, DNA repair, DNA replication and chromosomal stability. DNA accessibility is regulated via a complex set of post-translational modifications of histones, also called histone code, and nucleosome remodeling. This chain is Histone H2B.1, found in Lilium longiflorum (Trumpet lily).